The primary structure comprises 269 residues: Glutamate racemase (269 aa).

Substrate is bound by residues 7-8 and 39-40; these read DS and YG. Cys-70 serves as the catalytic Proton donor/acceptor. 71 to 72 is a substrate binding site; that stretch reads NT. The Proton donor/acceptor role is filled by Cys-194. Residue 195–196 participates in substrate binding; the sequence is TH.

This sequence belongs to the aspartate/glutamate racemases family.

The enzyme catalyses L-glutamate = D-glutamate. It functions in the pathway cell wall biogenesis; peptidoglycan biosynthesis. Functionally, provides the (R)-glutamate required for cell wall biosynthesis. This chain is Glutamate racemase, found in Ruegeria sp. (strain TM1040) (Silicibacter sp.).